The sequence spans 826 residues: BLOC-2 complex member HPS5 homolog (826 aa).

WD repeat units follow at residues 22-61 (KHHN…LLLI), 63-102 (NKHG…QATP), and 110-149 (DQSV…GHSL). The segment covering 422–446 (ALDTHSSGGSSATTERSLSGGSSSR) has biased composition (polar residues). The disordered stretch occupies residues 422–447 (ALDTHSSGGSSATTERSLSGGSSSRA).

Belongs to the HPS5 family. In terms of tissue distribution, expressed in eye pigment granules.

In terms of biological role, has a role in the biogenesis of eye pigment granules. Eye pigment granules are specialized forms of late endosomes or lysosomes. Biogenesis of pigment granules in the eye requires molecular components required for protein delivery to lysosomes. In Drosophila melanogaster (Fruit fly), this protein is BLOC-2 complex member HPS5 homolog.